Consider the following 784-residue polypeptide: Rabenosyn-5 (784 aa).

Residue Ala-2 is modified to N-acetylalanine. Position 3 is a phosphoserine (Ser-3). A C2H2-type zinc finger spans residues 14-37; sequence FLCPLCLKDLQSFYQLHSHYEEEH. The tract at residues 100-263 is necessary for the correct targeting to endosomes; the sequence is RSHLSDFKKH…HCKDTLLKRE (164 aa). An FYVE-type zinc finger spans residues 157–260; sequence DQDVPFCPDC…CCTHCKDTLL (104 aa). Residues Cys-163, Cys-166, Cys-179, Cys-182, Cys-187, and Cys-190 each contribute to the Zn(2+) site. A compositionally biased stretch (polar residues) spans 207 to 224; that stretch reads KESLSTHTSPSQSPNSVH. The interval 207–241 is disordered; the sequence is KESLSTHTSPSQSPNSVHGSRRGSISSMSSVSSVL. A phosphoserine mark is found at Ser-215, Ser-219, Ser-226, and Ser-230. The span at 228–240 shows a compositional bias: low complexity; sequence RGSISSMSSVSSV. Residues Cys-252 and Cys-255 each contribute to the Zn(2+) site. Residues 264 to 500 are necessary for interaction with RAB4A; it reads QQIDEKEHTP…QLQDEYDQQQ (237 aa). The segment at 264-784 is necessary for interaction with EHD1; sequence QQIDEKEHTP…TLAKQKGGTD (521 aa). Coiled-coil stretches lie at residues 378–414 and 472–531; these read TKEQFEELKKKRKEEMERKRAVERQAALESQRRLEER and QAKA…RELE. Residues 390-400 are compositionally biased toward basic and acidic residues; sequence KEEMERKRAVE. Residues 390–429 are disordered; that stretch reads KEEMERKRAVERQAALESQRRLEERQSGLASRAANGEVAS. Positions 496-515 constitute a UIM domain; it reads YDQQQTEKAIELSRRQAEEE. Residues 574-732 form a disordered region; that stretch reads DLGSSPVPSS…DSDSGPEAEE (159 aa). The segment covering 579–598 has biased composition (polar residues); the sequence is PVPSSTAPKTPSLSSTQPTR. Positions 627 to 784 are necessary for interaction with RAB5A; the sequence is PFDEEDLSSP…TLAKQKGGTD (158 aa). Residues 663–673 show a composition bias toward acidic residues; the sequence is PFEEEDEEEEA. Ser-684 carries the post-translational modification Phosphoserine. Residues 722–732 show a composition bias toward acidic residues; that stretch reads MDSDSGPEAEE.

As to quaternary structure, interacts with EHD1, RAB4A, RAB5A, RAB14, RAB22A, RAB24 and VPS45. Binds simultaneously to RAB4A and RAB5A in vitro. Interacts with RAB4A and RAB5A that has been activated by GTP binding.

The protein resides in the cell membrane. It localises to the early endosome membrane. Functionally, rab4/Rab5 effector protein acting in early endocytic membrane fusion and membrane trafficking of recycling endosomes. Required for endosome fusion either homotypically or with clathrin coated vesicles. Plays a role in the lysosomal trafficking of CTSD/cathepsin D from the Golgi to lysosomes. Also promotes the recycling of transferrin directly from early endosomes to the plasma membrane. Binds phospholipid vesicles containing phosphatidylinositol 3-phosphate (PtdInsP3). Plays a role in the recycling of transferrin receptor to the plasma membrane. This is Rabenosyn-5 from Homo sapiens (Human).